A 487-amino-acid polypeptide reads, in one-letter code: Kynureninase 1 (487 aa).

Pyridoxal 5'-phosphate contacts are provided by residues Leu149, Thr150, 177-180 (FPSD), Ser234, Asp263, His266, and Tyr288. Lys289 bears the N6-(pyridoxal phosphate)lysine mark. Positions 329 and 357 each coordinate pyridoxal 5'-phosphate.

The protein belongs to the kynureninase family. As to quaternary structure, homodimer. Pyridoxal 5'-phosphate serves as cofactor.

The protein resides in the cytoplasm. The catalysed reaction is L-kynurenine + H2O = anthranilate + L-alanine + H(+). The enzyme catalyses 3-hydroxy-L-kynurenine + H2O = 3-hydroxyanthranilate + L-alanine + H(+). It functions in the pathway amino-acid degradation; L-kynurenine degradation; L-alanine and anthranilate from L-kynurenine: step 1/1. It participates in cofactor biosynthesis; NAD(+) biosynthesis; quinolinate from L-kynurenine: step 2/3. Functionally, catalyzes the cleavage of L-kynurenine (L-Kyn) and L-3-hydroxykynurenine (L-3OHKyn) into anthranilic acid (AA) and 3-hydroxyanthranilic acid (3-OHAA), respectively. This Emericella nidulans (strain FGSC A4 / ATCC 38163 / CBS 112.46 / NRRL 194 / M139) (Aspergillus nidulans) protein is Kynureninase 1 (bna5-1).